We begin with the raw amino-acid sequence, 181 residues long: ATP synthase subunit delta (181 aa).

The protein belongs to the ATPase delta chain family. F-type ATPases have 2 components, F(1) - the catalytic core - and F(0) - the membrane proton channel. F(1) has five subunits: alpha(3), beta(3), gamma(1), delta(1), epsilon(1). F(0) has three main subunits: a(1), b(2) and c(10-14). The alpha and beta chains form an alternating ring which encloses part of the gamma chain. F(1) is attached to F(0) by a central stalk formed by the gamma and epsilon chains, while a peripheral stalk is formed by the delta and b chains.

The protein localises to the cell inner membrane. Its function is as follows. F(1)F(0) ATP synthase produces ATP from ADP in the presence of a proton or sodium gradient. F-type ATPases consist of two structural domains, F(1) containing the extramembraneous catalytic core and F(0) containing the membrane proton channel, linked together by a central stalk and a peripheral stalk. During catalysis, ATP synthesis in the catalytic domain of F(1) is coupled via a rotary mechanism of the central stalk subunits to proton translocation. Functionally, this protein is part of the stalk that links CF(0) to CF(1). It either transmits conformational changes from CF(0) to CF(1) or is implicated in proton conduction. This is ATP synthase subunit delta from Chlorobium luteolum (strain DSM 273 / BCRC 81028 / 2530) (Pelodictyon luteolum).